Here is a 378-residue protein sequence, read N- to C-terminus: 7-methylxanthine methyltransferase 1 (378 aa).

The S-adenosyl-L-homocysteine site is built by tyrosine 18, cysteine 61, asparagine 66, aspartate 100, leucine 101, serine 139, phenylalanine 140, and cysteine 156. Tyrosine 157, histidine 160, and tryptophan 161 together coordinate theobromine. Residues asparagine 178, aspartate 260, phenylalanine 262, and asparagine 263 each coordinate Mg(2+). Tyrosine 362 provides a ligand contact to theobromine.

Belongs to the methyltransferase superfamily. Type-7 methyltransferase family. Mg(2+) is required as a cofactor. In terms of tissue distribution, mainly expressed, at low levels, in leaves and fruits (grains). Also present, at lower levels, in roots, stamens and pistils.

The protein resides in the cytoplasm. It catalyses the reaction 7-methylxanthine + S-adenosyl-L-methionine = theobromine + S-adenosyl-L-homocysteine + H(+). The protein operates within alkaloid biosynthesis. Involved in the biosynthesis of caffeine. Catalyzes the conversion of 7-methylxanthine (7mX) to theobromine and of paraxanthine to caffeine. The polypeptide is 7-methylxanthine methyltransferase 1 (Coffea canephora (Robusta coffee)).